Consider the following 877-residue polypeptide: Ewing's tumor-associated antigen 1 homolog (877 aa).

Positions 1-82 (MQLKDGGTGM…GRSPRGKETP (82 aa)) are disordered. The segment covering 56–65 (AGTRSARRAQ) has biased composition (basic residues). Residue lysine 87 forms a Glycyl lysine isopeptide (Lys-Gly) (interchain with G-Cter in SUMO2) linkage. An ATR-activation domain (AAD) motif is present at residues 107–113 (IFWDQNS). 2 coiled-coil regions span residues 185–213 (KTKNREKELMKLAQQFDKNMEELDVIQEQ) and 306–335 (AFLNNSKTSLRKKNALLQEEIITTETLLTE). Residues lysine 416 and lysine 444 each participate in a glycyl lysine isopeptide (Lys-Gly) (interchain with G-Cter in SUMO2) cross-link. Positions 450-479 (PSKTRNGELRNAGEHRFSSHPGDESRKVPF) are disordered. Residues 454–476 (RNGELRNAGEHRFSSHPGDESRK) show a composition bias toward basic and acidic residues. Serine 467 carries the post-translational modification Phosphoserine. Lysine 510 participates in a covalent cross-link: Glycyl lysine isopeptide (Lys-Gly) (interchain with G-Cter in SUMO2). The short motif at 607-622 (GEVDDDLFCQACDDIE) is the RBM1 motif element. Disordered regions lie at residues 626–664 (QQENKGSEESESVSYTSTRGSRSSSTASKQASQSAPSKH) and 818–877 (ANQQ…ISLP). Low complexity predominate over residues 637–662 (SVSYTSTRGSRSSSTASKQASQSAPS). Over residues 818-833 (ANQQQSSINYSESLKP) the composition is skewed to polar residues. Residues 840 to 859 (ERNRKYSPEEIQRKRQEALV) are compositionally biased toward basic and acidic residues. The RBM2 motif motif lies at 843–865 (RKYSPEEIQRKRQEALVRRKAKA). Over residues 868-877 (TVQSAPISLP) the composition is skewed to polar residues.

As to quaternary structure, interacts (via RBM1 motif) with RPA1. Interacts (via RBM2 motif) with RPA2. Interacts (via the ATR-activation domain motif) with ATR. In terms of processing, phosphorylated by ATR.

The protein resides in the nucleus. In terms of biological role, replication stress response protein that accumulates at DNA damage sites and promotes replication fork progression and integrity. Recruited to stalled replication forks via interaction with the RPA complex and directly stimulates ATR kinase activity independently of TOPBP1. Probably only regulates a subset of ATR targets. The polypeptide is Ewing's tumor-associated antigen 1 homolog (Mus musculus (Mouse)).